A 1072-amino-acid polypeptide reads, in one-letter code: 5'-3' exoribonuclease 2 (1072 aa).

The stretch at 118–144 (RRFRAAREAMEKEEDKQKFVELLKKQN) forms a coiled coil. Residues 269–286 (RLCKICGQKGHDAMNCKG) form a CCHC-type zinc finger. The segment covering 414–435 (KETEDRREAGFKRRKLADEARQ) has biased composition (basic and acidic residues). Disordered stretches follow at residues 414-459 (KETE…GFSF), 509-577 (QGTS…AEPT), 865-911 (ASRS…GGGG), and 943-1072 (GGGY…RGYR). Residues 518–543 (AESTETPAETAAAAPATEEQAAPPAA) show a composition bias toward low complexity. Over residues 892–911 (GPGGGQQGGRGRGGYQGGGG) the composition is skewed to gly residues. Over residues 955–967 (GPPPGWQPPPPPG) the composition is skewed to pro residues. Gly residues-rich tracts occupy residues 983–1000 (AYGG…GSSR), 1025–1036 (YGQGGSRGGYQG), and 1056–1072 (GYRG…RGYR).

This sequence belongs to the 5'-3' exonuclease family. XRN2/RAT1 subfamily. Interacts with rai1; the interaction is direct, stabilizes exr-1 protein structure and may stimulate its exoribonuclease activity. The interaction also stimulates rai1 pyrophosphohydrolase activity, probably by recruiting it to mRNA substrates.

The protein resides in the nucleus. Functionally, possesses 5'-&gt;3' exoribonuclease activity. Required for the processing of nuclear mRNA and rRNA precursors. May promote the termination of transcription by RNA polymerase II. Essential for vegetative cell growth and chromosome segregation. The chain is 5'-3' exoribonuclease 2 (exr-1) from Neurospora crassa (strain ATCC 24698 / 74-OR23-1A / CBS 708.71 / DSM 1257 / FGSC 987).